The sequence spans 344 residues: Neurotrimin (344 aa).

The signal sequence occupies residues 1–33 (MGVCGYLFLPWKCLVVVSLRLLFLVPTGVPVRS). 3 Ig-like C2-type domains span residues 39–126 (PKAM…PKTS), 136–218 (PKIV…VKVT), and 222–309 (PPYI…ASIM). N-linked (GlcNAc...) asparagine glycans are attached at residues Asn-44, Asn-70, and Asn-152. A disulfide bond links Cys-57 and Cys-115. Cystine bridges form between Cys-157–Cys-201 and Cys-243–Cys-295. Asn-284, Asn-292, and Asn-305 each carry an N-linked (GlcNAc...) asparagine glycan. Residue Asn-321 is the site of GPI-anchor amidated asparagine; alternate attachment. A glycan (N-linked (GlcNAc...) asparagine; alternate) is linked at Asn-321. Residues 322 to 344 (GTSRRAGCIWLLPLLVLHLLLKF) constitute a propeptide, removed in mature form.

It belongs to the immunoglobulin superfamily. IgLON family.

The protein resides in the cell membrane. Neural cell adhesion molecule. This Mus musculus (Mouse) protein is Neurotrimin (Ntm).